The chain runs to 162 residues: uncharacterized protein (162 aa).

The HTH asnC-type domain occupies 6–78 (LDDLDRNILR…ALIVLEVGKP (73 aa)). Positions 25-44 (ISELSEQLKKPESTIHFRIK) form a DNA-binding region, H-T-H motif.

This is an uncharacterized protein from Pyrococcus furiosus (strain ATCC 43587 / DSM 3638 / JCM 8422 / Vc1).